The following is a 435-amino-acid chain: UDP-glucuronic acid decarboxylase 1 (435 aa).

The segment at 1 to 33 (MKQLHKQMSSKRDEETIPMSQSSPYSPKTLKHP) is disordered. Residues 1 to 48 (MKQLHKQMSSKRDEETIPMSQSSPYSPKTLKHPRSLPRSLHYLFREQR) lie on the Cytoplasmic side of the membrane. A helical; Signal-anchor for type II membrane protein membrane pass occupies residues 49–69 (LLFILVGILIGSTFFILQPSL). The Lumenal segment spans residues 70 to 435 (SRLGAAESTS…ILNEDEGKGL (366 aa)). A compositionally biased stretch (polar residues) spans 91–100 (DSPPSRSTFN). The tract at residues 91-110 (DSPPSRSTFNSGGGGGRTGR) is disordered. 10 residues coordinate NAD(+): Gly129, Phe130, Val131, Asp150, Asn151, Phe153, Thr154, Gly155, Asp175, and Val176. Residue Ile180 participates in UDP-alpha-D-glucuronate binding. Residue Leu190 participates in NAD(+) binding. Lys208 serves as a coordination point for UDP-alpha-D-glucuronate. Thr209 contributes to the NAD(+) binding site. Residues Asn216, Gly219, Lys222, and Arg223 each coordinate UDP-alpha-D-glucuronate. Residues Tyr262 and Lys266 each coordinate NAD(+). The active-site Proton acceptor is the Tyr262. UDP-alpha-D-glucuronate is bound at residue Tyr276. Thr292 and Arg303 together coordinate NAD(+). The disordered stretch occupies residues 380–401 (EFKPNTADDPHKRKPDISKAKE). Residues 385-401 (TADDPHKRKPDISKAKE) show a composition bias toward basic and acidic residues.

Belongs to the NAD(P)-dependent epimerase/dehydratase family. UDP-glucuronic acid decarboxylase subfamily. NAD(+) is required as a cofactor. In terms of tissue distribution, ubiquitous.

It localises to the golgi apparatus. It is found in the golgi stack membrane. The catalysed reaction is UDP-alpha-D-glucuronate + H(+) = UDP-alpha-D-xylose + CO2. The protein operates within nucleotide-sugar biosynthesis; UDP-alpha-D-xylose biosynthesis; UDP-alpha-D-xylose from UDP-alpha-D-glucuronate: step 1/1. Catalyzes the NAD-dependent decarboxylation of UDP-glucuronic acid to UDP-xylose. Necessary for the biosynthesis of the core tetrasaccharide in glycosaminoglycan biosynthesis. The chain is UDP-glucuronic acid decarboxylase 1 from Arabidopsis thaliana (Mouse-ear cress).